The primary structure comprises 288 residues: Eukaryotic translation initiation factor 3 subunit G (288 aa).

The disordered stretch occupies residues M1–G33. Residues A11 to N20 are compositionally biased toward acidic residues. Over residues E21–G33 the composition is skewed to polar residues. Residues A208–K286 form the RRM domain.

The protein belongs to the eIF-3 subunit G family. In terms of assembly, component of the eukaryotic translation initiation factor 3 (eIF-3) complex.

Its subcellular location is the cytoplasm. RNA-binding component of the eukaryotic translation initiation factor 3 (eIF-3) complex, which is involved in protein synthesis of a specialized repertoire of mRNAs and, together with other initiation factors, stimulates binding of mRNA and methionyl-tRNAi to the 40S ribosome. The eIF-3 complex specifically targets and initiates translation of a subset of mRNAs involved in cell proliferation. This subunit can bind 18S rRNA. The chain is Eukaryotic translation initiation factor 3 subunit G (tif35) from Sclerotinia sclerotiorum (strain ATCC 18683 / 1980 / Ss-1) (White mold).